Reading from the N-terminus, the 37-residue chain is Large ribosomal subunit protein bL36c (37 aa).

The protein belongs to the bacterial ribosomal protein bL36 family.

It is found in the plastid. Its subcellular location is the organellar chromatophore. This chain is Large ribosomal subunit protein bL36c, found in Paulinella chromatophora.